Here is a 127-residue protein sequence, read N- to C-terminus: Gamma-synuclein (127 aa).

2 repeat units span residues 20–30 (EKTKQGVTEAA) and 31–41 (EKTKEGVMYVG). The segment at 20 to 67 (EKTKQGVTEAAEKTKEGVMYVGAKTKENVVQSVTSVAEKTKEQANAVS) is 4 X 11 AA tandem repeats of [EGSA]-K-T-K-[EQ]-[GQ]-V-X(4). One copy of the 3; approximate repeat lies at 42 to 56 (AKTKENVVQSVTSVA). Repeat unit 4 spans residues 57–67 (EKTKEQANAVS). 2 positions are modified to phosphoserine: S67 and S72. Residues 96–127 (RKEDLRPSAPQQEGEASKEKEEVAEEAQSGGD) are disordered. Residue S124 is modified to Phosphoserine; by BARK1, CaMK2 and CK2.

It belongs to the synuclein family. May be a centrosome-associated protein. Interacts with MYOC; affects its secretion and its aggregation. In terms of processing, phosphorylated. Phosphorylation by GRK5 appears to occur on residues distinct from the residue phosphorylated by other kinases. In terms of tissue distribution, highly expressed in brain, particularly in the substantia nigra. Also expressed in the corpus callosum, heart, skeletal muscle, ovary, testis, colon and spleen. Weak expression in pancreas, kidney and lung.

Its subcellular location is the cytoplasm. The protein resides in the perinuclear region. The protein localises to the cytoskeleton. It is found in the microtubule organizing center. It localises to the centrosome. Its subcellular location is the spindle. Its function is as follows. Plays a role in neurofilament network integrity. May be involved in modulating axonal architecture during development and in the adult. In vitro, increases the susceptibility of neurofilament-H to calcium-dependent proteases. May also function in modulating the keratin network in skin. Activates the MAPK and Elk-1 signal transduction pathway. The sequence is that of Gamma-synuclein (SNCG) from Homo sapiens (Human).